Here is a 71-residue protein sequence, read N- to C-terminus: uncharacterized protein (71 aa).

This is an uncharacterized protein from Autographa californica nuclear polyhedrosis virus (AcMNPV).